A 956-amino-acid chain; its full sequence is Replication factor C subunit 1 (956 aa).

Basic and acidic residues-rich tracts occupy residues 1-15 and 50-74; these read MSDI…HEKG and TADR…KEVE. Disordered regions lie at residues 1 to 206 and 286 to 332; these read MSDI…TPDC and KKSL…AKGK. A compositionally biased stretch (gly residues) spans 158–183; it reads RGRGGRAAPGASTGGRGRGGGRGGFM. 2 stretches are compositionally biased toward basic and acidic residues: residues 186-200 and 288-298; these read GERK…KEVP and SLPERSNKGTE. Positions 202–292 constitute a BRCT domain; the sequence is GTPDCLAGLT…KPVKKSLPER (91 aa). 399–406 is a binding site for ATP; that stretch reads SGTPGIGK. Residues 858-956 are disordered; that stretch reads LEPTVDSLRD…GRGSGAKRKR (99 aa). Acidic residues predominate over residues 866–892; the sequence is RDEDGEPLADNEEGNGSDAEEDSEEAT. Residues 916–925 are compositionally biased toward low complexity; the sequence is KGAGSSGSRK.

Belongs to the activator 1 large subunit family. Heterotetramer of subunits RFC2, RFC3, RFC4 and RFC5 that can form a complex with RFC1. As to expression, expressed at high levels in flowers and siliques, and at lower levels in roots, stems and leaves.

It is found in the nucleus. In terms of biological role, plays a role as mediator of transcriptional gene silencing (TGS), DNA replication, DNA repair, hypersensitive response (HR) and telomere length regulation. Is required in meiosis for DNA double-strand break (DSB) repair during meiotic homologous recombination. May participate in the RAD51-mediated recombination intermediate repair process. Is important for lagging strand synthesis. Promotes meiotic recombination via a specific pathway for crossovers (COs) that involves the formation of double Holliday Junction (dHJ) intermediates. This Arabidopsis thaliana (Mouse-ear cress) protein is Replication factor C subunit 1 (RFC1).